The following is a 201-amino-acid chain: MALHDENVVWHPHPVTVTAREQLHGHRGVVLWFTGLSGSGKSTVAGALEEALHHRSVSTYLLDGDNVRHGLCRNLGFSDADRKENIRRVGEVASLMADAGLIVLTAFISPHRAERQLVQERVGHDRFIEIYVDTPLAVCEQRDPKGLYKKARAGELRNFTGIDGIYEAPESPQIHLNGEQLVTNLVSQLLDLLRRRDIISS.

35–42 contributes to the ATP binding site; that stretch reads GLSGSGKS. Ser-109 serves as the catalytic Phosphoserine intermediate.

It belongs to the APS kinase family.

It catalyses the reaction adenosine 5'-phosphosulfate + ATP = 3'-phosphoadenylyl sulfate + ADP + H(+). It participates in sulfur metabolism; hydrogen sulfide biosynthesis; sulfite from sulfate: step 2/3. In terms of biological role, catalyzes the synthesis of activated sulfate. In Salmonella arizonae (strain ATCC BAA-731 / CDC346-86 / RSK2980), this protein is Adenylyl-sulfate kinase.